We begin with the raw amino-acid sequence, 512 residues long: ATP synthase subunit alpha (512 aa).

169–176 lines the ATP pocket; the sequence is GDRQTGKT.

This sequence belongs to the ATPase alpha/beta chains family. In terms of assembly, F-type ATPases have 2 components, CF(1) - the catalytic core - and CF(0) - the membrane proton channel. CF(1) has five subunits: alpha(3), beta(3), gamma(1), delta(1), epsilon(1). CF(0) has three main subunits: a(1), b(2) and c(9-12). The alpha and beta chains form an alternating ring which encloses part of the gamma chain. CF(1) is attached to CF(0) by a central stalk formed by the gamma and epsilon chains, while a peripheral stalk is formed by the delta and b chains.

It localises to the cell inner membrane. The catalysed reaction is ATP + H2O + 4 H(+)(in) = ADP + phosphate + 5 H(+)(out). Produces ATP from ADP in the presence of a proton gradient across the membrane. The alpha chain is a regulatory subunit. The chain is ATP synthase subunit alpha from Dechloromonas aromatica (strain RCB).